Consider the following 431-residue polypeptide: BEL1-like homeodomain protein 5 (431 aa).

Residues 80 to 96 are SR/KY domain; the sequence is PIYLKAAQELLNEIVNV. Positions 128–199 are BELL domain; it reads GVAALQMKKA…AVKDMISLQI (72 aa). The segment at residues 228 to 290 is a DNA-binding region (homeobox); the sequence is AWRPQRGLPE…NARVRMWKPL (63 aa). Positions 302 to 312 are enriched in basic and acidic residues; sequence EESRKGSDRYS. Residues 302–333 are disordered; sequence EESRKGSDRYSTKGSSSKQPYNNTTSNESSNT. A compositionally biased stretch (polar residues) spans 313 to 322; the sequence is TKGSSSKQPY. Low complexity predominate over residues 323 to 333; that stretch reads NNTTSNESSNT.

This sequence belongs to the TALE/BELL homeobox family. In terms of assembly, may form heterodimeric complexes with TALE/KNOX proteins. Interacts with OFP1.

Its subcellular location is the nucleus. This is BEL1-like homeodomain protein 5 (BLH5) from Arabidopsis thaliana (Mouse-ear cress).